The sequence spans 560 residues: Radial spoke head protein 3 homolog (560 aa).

2 disordered regions span residues 134–186 (RKRG…EEPM) and 225–249 (ARKR…PVEG). Positions 153-162 (RAPSTYTYTS) are enriched in polar residues. Residues 215–239 (DSLELQRQREARKRALARKQAQEQL) are a coiled coil. Position 286 is a phosphothreonine; by MAPK1 (Thr-286). A coiled-coil region spans residues 331-385 (LEVMEEEELANLRASQREYEELRNSERAEVQRLEEQERRHREEKERRKKQQWEIM). Disordered stretches follow at residues 354–375 (NSER…EEKE), 473–498 (HGED…ESLE), and 526–560 (DRRS…EELS).

The protein belongs to the flagellar radial spoke RSP3 family. Component of the axonemal radial spoke 1 (RS1) and 2 (RS2) complexes, at least composed of spoke head proteins RSPH1, RSPH3, RSPH9 and the cilia-specific component RSPH4A or sperm-specific component RSPH6A, spoke stalk proteins RSPH14, DNAJB13, DYDC1, ROPN1L and NME5, and the RS1 complex-specific anchor protein IQUB. Interacts with IQUB. Interacts with phosphorylated MAPK1. Interacts with MEK1. Interacts with PKA regulatory subunits PRKAR1A and PRKAR1B. Interacts with RSPH1. Interacts with RSPH4A. Interacts with RSPH6A. Interacts with RSPH9. Interacts with LRRC23.

Its subcellular location is the cytoplasm. It is found in the cytoskeleton. The protein localises to the cilium axoneme. It localises to the flagellum axoneme. Functions as part of axonemal radial spoke complexes that play an important part in the motility of sperm and cilia. Functions as a protein kinase A-anchoring protein that scaffolds the cAMP-dependent protein kinase holoenzyme. May serve as a point of convergence for MAPK and PKA signaling in cilia. This is Radial spoke head protein 3 homolog (RSPH3) from Homo sapiens (Human).